The primary structure comprises 152 residues: MSIAPLLRKVFLIDLIKGLSITFKYQAPKDCQTEQYPQERPVITDRFRGQPMMKLGENGETLCIGCNLCALACPENLIAMKSDRDPVTKKKVMVTYVYDVSRCMFCGLCEEACPTQSLKLGTGYEMALYSREGMVLDRKVLEHRTAPEPYEK.

4Fe-4S ferredoxin-type domains follow at residues 53 to 83 and 94 to 123; these read MKLG…MKSD and VTYV…LGTG. [4Fe-4S] cluster-binding residues include Cys63, Cys66, Cys69, Cys73, Cys103, Cys106, Cys109, and Cys113.

This sequence belongs to the complex I 23 kDa subunit family. As to quaternary structure, NDH-1 is composed of 14 different subunits. Subunits NuoA, H, J, K, L, M, N constitute the membrane sector of the complex. [4Fe-4S] cluster serves as cofactor.

The protein resides in the cell inner membrane. It carries out the reaction a quinone + NADH + 5 H(+)(in) = a quinol + NAD(+) + 4 H(+)(out). Its function is as follows. NDH-1 shuttles electrons from NADH, via FMN and iron-sulfur (Fe-S) centers, to quinones in the respiratory chain. The immediate electron acceptor for the enzyme in this species is believed to be ubiquinone. Couples the redox reaction to proton translocation (for every two electrons transferred, four hydrogen ions are translocated across the cytoplasmic membrane), and thus conserves the redox energy in a proton gradient. The sequence is that of NADH-quinone oxidoreductase subunit I 1 from Koribacter versatilis (strain Ellin345).